Here is a 518-residue protein sequence, read N- to C-terminus: Bifunctional methyltransferase (518 aa).

The segment at 1–300 (MQYSIKQILS…SHNRVIEISP (300 aa)) is hemK. Residues 1–302 (MQYSIKQILS…NRVIEISPIN (302 aa)) form an RF MTase region. S-adenosyl-L-methionine contacts are provided by residues 140–144 (GTGSG), D163, W192, N207, E347, E372, N399, and D421. 207-210 (NPPY) serves as a coordination point for substrate. Residues 301–518 (INLNRSYARR…MILQHALTDH (218 aa)) form a tRNA (guanine-N(7)-)-methyltransferase region. The interval 305 to 518 (RSYARRIGKS…MILQHALTDH (214 aa)) is tRNA MTase. D421 is an active-site residue. Residues K425 and D457 each contribute to the substrate site.

This sequence in the C-terminal section; belongs to the class I-like SAM-binding methyltransferase superfamily. TrmB family. The protein in the N-terminal section; belongs to the protein N5-glutamine methyltransferase family. PrmC subfamily.

The enzyme catalyses L-glutaminyl-[peptide chain release factor] + S-adenosyl-L-methionine = N(5)-methyl-L-glutaminyl-[peptide chain release factor] + S-adenosyl-L-homocysteine + H(+). The catalysed reaction is guanosine(46) in tRNA + S-adenosyl-L-methionine = N(7)-methylguanosine(46) in tRNA + S-adenosyl-L-homocysteine. In terms of biological role, methylates the class 1 translation termination release factors RF1/PrfA and RF2/PrfB on the glutamine residue of the universally conserved GGQ motif. Its function is as follows. Catalyzes the formation of N(7)-methylguanine at position 46 (m7G46) in tRNA. This Rickettsia prowazekii (strain Madrid E) protein is Bifunctional methyltransferase (prmC/trmB).